Here is a 337-residue protein sequence, read N- to C-terminus: Phosphate acyltransferase (337 aa).

It belongs to the PlsX family. As to quaternary structure, homodimer. Probably interacts with PlsY.

Its subcellular location is the cytoplasm. The enzyme catalyses a fatty acyl-[ACP] + phosphate = an acyl phosphate + holo-[ACP]. Its pathway is lipid metabolism; phospholipid metabolism. Its function is as follows. Catalyzes the reversible formation of acyl-phosphate (acyl-PO(4)) from acyl-[acyl-carrier-protein] (acyl-ACP). This enzyme utilizes acyl-ACP as fatty acyl donor, but not acyl-CoA. The polypeptide is Phosphate acyltransferase (Listeria monocytogenes serotype 4b (strain F2365)).